The primary structure comprises 447 residues: GTPase Der (447 aa).

2 EngA-type G domains span residues 4 to 165 (QIIT…PEEE) and 180 to 357 (LQIV…KIWN). GTP contacts are provided by residues 10-17 (GRPNVGKS), 57-61 (DTPGL), 119-122 (NKCE), 186-193 (GRPNAGKS), 233-237 (DTAGL), and 298-301 (NKWD). In terms of domain architecture, KH-like spans 358–443 (KKITTSKLNE…PIRFIYVKTK (86 aa)).

The protein belongs to the TRAFAC class TrmE-Era-EngA-EngB-Septin-like GTPase superfamily. EngA (Der) GTPase family. As to quaternary structure, associates with the 50S ribosomal subunit.

GTPase that plays an essential role in the late steps of ribosome biogenesis. The chain is GTPase Der from Rickettsia conorii (strain ATCC VR-613 / Malish 7).